The primary structure comprises 156 residues: AP-1 complex subunit sigma-1 (156 aa).

Belongs to the adaptor complexes small subunit family. In terms of assembly, adapter protein complex 1 (AP-1) is a heterotetramer composed of two large adaptins (gamma-type subunit APL4 and beta-type subunit APL2), a medium adaptin (mu-type subunit APM1) and a small adaptin (sigma-type subunit APS1). AP-1 interacts with clathrin. Also a component of the AP-1R complex composed of at least APM2, APL4 and APS1.

Its subcellular location is the cytoplasm. It is found in the nucleus. The protein localises to the cytoplasmic vesicle. It localises to the clathrin-coated vesicle membrane. The protein resides in the endosome. Its subcellular location is the golgi apparatus. Functionally, component of the adapter complexes which link clathrin to receptors in coated vesicles. Clathrin-associated protein complexes are believed to interact with the cytoplasmic tails of membrane proteins, leading to their selection and concentration. AP19 is probably a subunit of the Golgi membrane adapter. Component of the AP-1-related (AP-1R) complex, an adapter protein complex that mediates sorting of cargo SNARE SNC1. In contrast to the APM1-containing AP-1 complex, AP-1R is incapable of sorting CHS3. The protein is AP-1 complex subunit sigma-1 (APS1) of Saccharomyces cerevisiae (strain ATCC 204508 / S288c) (Baker's yeast).